The sequence spans 244 residues: Cell division protein ZipA (244 aa).

The Periplasmic portion of the chain corresponds to 1 to 4 (MSDM). The chain crosses the membrane as a helical span at residues 5–25 (AMIRIGILIAGLLLVAAIFLF). The Cytoplasmic segment spans residues 26–244 (GRPKKSPQGR…APPLTKSPRW (219 aa)). Residues 30 to 91 (KSPQGRRVDK…GAGGNDVGKR (62 aa)) are disordered. Over residues 35 to 50 (RRVDKDDTQPRERREP) the composition is skewed to basic and acidic residues.

It belongs to the ZipA family. Interacts with FtsZ via their C-terminal domains.

The protein localises to the cell inner membrane. Essential cell division protein that stabilizes the FtsZ protofilaments by cross-linking them and that serves as a cytoplasmic membrane anchor for the Z ring. Also required for the recruitment to the septal ring of downstream cell division proteins. This Xanthomonas campestris pv. campestris (strain ATCC 33913 / DSM 3586 / NCPPB 528 / LMG 568 / P 25) protein is Cell division protein ZipA.